The chain runs to 632 residues: MKKISDYSLLFKINSPEDLRKLAIEQVEQVCKELREYIIEVLSENPGHLGSNLGTVELTVALHYVFNTPYDRIVWDVGHQAYGHKILTERRESFHTLRKLGGISGFPNPQESEYDAFIAGHASNSISAALGMAIASWLKGENRKIVAIIGDGSITGGLAFEGLNNVSSNPNDLLIVLNDNNMAIDRSVGGLSQSLIKITTSYTYNTIRFKLYNFLKKYSIIKERERGFILRFTNSLKALLTKQHNIFEGLNIRYFGPIDGHNIKELVKVFEDIKSMKGPKLLHVCTVKGKGFGPAENKADVWHAPGKFNPETGERIKVWSENLPSLYQDVFGHTLVELARMNNNIVGVTPAMSSGCSMTFLMKEMPHRTFDVGIAEGHAITFAAGLAKEGMIPFCNVYSSFMQRAYDNIIHDAVLQNLNMILCLDRAGLVGEDGVTHHGVLDLAYLRCIPNITITAPLNEKDLRNLMFTAIQPNAKGVFVIRYPKGYGELKNWEYSFEALPVGKGRKLKEGKEIAVVSIGTIGNLARKAIRLVEKLGISVAHYDMIYLKPIDEELLHEIGKNYRCVVVIEDGTIKGGLGTAVIEFMVQNGYDPKIKQIGVPDEFIPHGTIAELYKLCGMDIKSIVKCLIEEK.

Residues H79 and 120-122 (GHA) each bind thiamine diphosphate. Residue D151 participates in Mg(2+) binding. Residues 152–153 (GS), N180, F292, and E376 contribute to the thiamine diphosphate site. N180 contributes to the Mg(2+) binding site.

Belongs to the transketolase family. DXPS subfamily. In terms of assembly, homodimer. Requires Mg(2+) as cofactor. The cofactor is thiamine diphosphate.

The catalysed reaction is D-glyceraldehyde 3-phosphate + pyruvate + H(+) = 1-deoxy-D-xylulose 5-phosphate + CO2. It functions in the pathway metabolic intermediate biosynthesis; 1-deoxy-D-xylulose 5-phosphate biosynthesis; 1-deoxy-D-xylulose 5-phosphate from D-glyceraldehyde 3-phosphate and pyruvate: step 1/1. Functionally, catalyzes the acyloin condensation reaction between C atoms 2 and 3 of pyruvate and glyceraldehyde 3-phosphate to yield 1-deoxy-D-xylulose-5-phosphate (DXP). This Azobacteroides pseudotrichonymphae genomovar. CFP2 protein is 1-deoxy-D-xylulose-5-phosphate synthase.